The primary structure comprises 489 residues: Ent-kaurenoic acid oxidase 2 (489 aa).

The helical transmembrane segment at 5 to 25 (GLILMWFPLIILGLFVLKWVL) threads the bilayer. C436 contributes to the heme binding site.

This sequence belongs to the cytochrome P450 family. Requires heme as cofactor. As to expression, widely expressed. Highly expressed in influorescence stem, influorescence, and silique tissue. Weakly expressed in cauline and rosette leaves. Expressed at a weaker level in stem and influorescence than AtKAO1/CYP88A3.

Its subcellular location is the endoplasmic reticulum membrane. It catalyses the reaction ent-kaur-16-en-19-oate + 3 reduced [NADPH--hemoprotein reductase] + 3 O2 = gibberellin A12 + 3 oxidized [NADPH--hemoprotein reductase] + 4 H2O + 4 H(+). The enzyme catalyses ent-kaur-16-en-19-oate + reduced [NADPH--hemoprotein reductase] + O2 = ent-7alpha-hydroxykaur-16-en-19-oate + oxidized [NADPH--hemoprotein reductase] + H2O + H(+). The catalysed reaction is ent-7alpha-hydroxykaur-16-en-19-oate + reduced [NADPH--hemoprotein reductase] + O2 = gibberellin A12 aldehyde + oxidized [NADPH--hemoprotein reductase] + 2 H2O + H(+). It carries out the reaction gibberellin A12 aldehyde + reduced [NADPH--hemoprotein reductase] + O2 = gibberellin A12 + oxidized [NADPH--hemoprotein reductase] + H2O + 2 H(+). It functions in the pathway plant hormone biosynthesis; gibberellin biosynthesis. In terms of biological role, catalyzes three successive oxidations of ent-kaurenoic acid giving gibberellin 12 (GA12), a key step in gibberellins (GAs) biosynthesis. GAs, which are involved many processes, including stem elongation, play a central role in plant development. This chain is Ent-kaurenoic acid oxidase 2, found in Arabidopsis thaliana (Mouse-ear cress).